The primary structure comprises 208 residues: Small ribosomal subunit protein eS8 (208 aa).

A disordered region spans residues 1–27; sequence MGISRDNWHKRRKTGGKRKPYHKKRKY. Glycine 2 carries the N-myristoyl glycine lipid modification. The span at 8 to 26 shows a compositional bias: basic residues; it reads WHKRRKTGGKRKPYHKKRK. N6-acetyllysine is present on residues lysine 37 and lysine 128. Threonine 130 bears the Phosphothreonine mark. Serine 160 is subject to Phosphoserine. Residues lysine 170 and lysine 193 each participate in a glycyl lysine isopeptide (Lys-Gly) (interchain with G-Cter in SUMO2) cross-link.

This sequence belongs to the eukaryotic ribosomal protein eS8 family. As to quaternary structure, component of the small ribosomal subunit. Identified in a IGF2BP1-dependent mRNP granule complex containing untranslated mRNAs. Part of the small subunit (SSU) processome, composed of more than 70 proteins and the RNA chaperone small nucleolar RNA (snoRNA) U3.

The protein resides in the cytoplasm. It is found in the membrane. It localises to the nucleus. Its subcellular location is the nucleolus. Functionally, component of the small ribosomal subunit. The ribosome is a large ribonucleoprotein complex responsible for the synthesis of proteins in the cell. Part of the small subunit (SSU) processome, first precursor of the small eukaryotic ribosomal subunit. During the assembly of the SSU processome in the nucleolus, many ribosome biogenesis factors, an RNA chaperone and ribosomal proteins associate with the nascent pre-rRNA and work in concert to generate RNA folding, modifications, rearrangements and cleavage as well as targeted degradation of pre-ribosomal RNA by the RNA exosome. The sequence is that of Small ribosomal subunit protein eS8 (Rps8) from Mus musculus (Mouse).